Reading from the N-terminus, the 56-residue chain is Large ribosomal subunit protein bL33 (56 aa).

A compositionally biased stretch (basic and acidic residues) spans 1–12 (MASKGGRDKIKL). A disordered region spans residues 1–30 (MASKGGRDKIKLESTAGTGHFYTTTKNKRT). Positions 15 to 25 (TAGTGHFYTTT) are enriched in polar residues.

The protein belongs to the bacterial ribosomal protein bL33 family.

In Ralstonia nicotianae (strain ATCC BAA-1114 / GMI1000) (Ralstonia solanacearum), this protein is Large ribosomal subunit protein bL33.